The chain runs to 443 residues: ATP-dependent protease ATPase subunit HslU (443 aa).

ATP contacts are provided by residues Ile18, 60–65, Asp256, Glu321, and Arg393; that span reads GVGKTE.

The protein belongs to the ClpX chaperone family. HslU subfamily. A double ring-shaped homohexamer of HslV is capped on each side by a ring-shaped HslU homohexamer. The assembly of the HslU/HslV complex is dependent on binding of ATP.

It is found in the cytoplasm. Its function is as follows. ATPase subunit of a proteasome-like degradation complex; this subunit has chaperone activity. The binding of ATP and its subsequent hydrolysis by HslU are essential for unfolding of protein substrates subsequently hydrolyzed by HslV. HslU recognizes the N-terminal part of its protein substrates and unfolds these before they are guided to HslV for hydrolysis. This chain is ATP-dependent protease ATPase subunit HslU, found in Shigella dysenteriae serotype 1 (strain Sd197).